The sequence spans 330 residues: Cyclic AMP receptor-like protein E (330 aa).

Residues 1-10 (MLSLSSYVLN) are Extracellular-facing. A helical transmembrane segment spans residues 11–31 (LVGSILCLIGCLFIIGHFFWI). At 32–40 (PLLRTSLSR) the chain is on the cytoplasmic side. Residues 41-61 (IIIYPTFILLLYDMVSFPSFI) traverse the membrane as a helical segment. Over 62-85 (SKTADLYIERSTIICNFQEAIIQY) the chain is Extracellular. Residues 86–106 (LILSNFIWSVCISVNLLYLCF) form a helical membrane-spanning segment. At 107-116 (SPNKNLKKNE) the chain is on the cytoplasmic side. The helical transmembrane segment at 117–137 (LLYHLCSWGIPLIVVVITKIP) threads the bilayer. Residues 138–156 (NMISDNGNQCRFKSPNYIK) are Extracellular-facing. A helical membrane pass occupies residues 157–177 (FYLETILFIAFMLFNFIVAFI). Residues 178–213 (TIKHIISGNLRESETTTTSVLFVNEKKITTKKIVWR) are Cytoplasmic-facing. The helical transmembrane segment at 214-234 (LLLYPSILSICYIMTLVLSIY) threads the bilayer. The Extracellular portion of the chain corresponds to 235–274 (QFSTESYGSGGAYANSINNKRNDKNTESGNSNNNNNSYIE). An N-linked (GlcNAc...) asparagine glycan is attached at Asn-269. The helical transmembrane segment at 275-295 (ILLYISKAIFLLQGFFNALVY) threads the bilayer. At 296–330 (LRSSKLRDRYKKITIFRKIFWRDEADYQSINDGFN) the chain is on the cytoplasmic side.

Belongs to the G-protein coupled receptor 5 family.

It is found in the membrane. Functionally, receptor for cAMP. This chain is Cyclic AMP receptor-like protein E (crlE), found in Dictyostelium discoideum (Social amoeba).